The sequence spans 139 residues: Angiogenin (139 aa).

A signal peptide spans 1–21; the sequence is MAMSSLWWTAILLLALTVSMC. The active-site Proton acceptor is the His-34. Cystine bridges form between Cys-49–Cys-102, Cys-64–Cys-111, and Cys-82–Cys-126. Positions 102 and 122 each coordinate tRNA. His-133 functions as the Proton donor in the catalytic mechanism.

The protein belongs to the pancreatic ribonuclease family. In terms of assembly, homodimer. Interacts with RNH1; inhibiting ANG ribonuclease activity.

It is found in the secreted. The protein resides in the nucleus. Its subcellular location is the nucleolus. It localises to the cytoplasm. The protein localises to the stress granule. In terms of biological role, secreted ribonuclease that can either promote or restrict cell proliferation of target cells, depending on the context. Endocytosed in target cells via its receptor PLXNB2 and translocates to the cytoplasm or nucleus. Under stress conditions, localizes to the cytoplasm and promotes the assembly of stress granules (SGs): specifically cleaves a subset of tRNAs within anticodon loops to produce tRNA-derived stress-induced fragments (tiRNAs), resulting in translation repression and inhibition of cell proliferation. tiRNas also prevent formation of apoptosome, thereby promoting cell survival. Preferentially cleaves RNAs between a pyrimidine and an adenosine residue, suggesting that it cleaves the anticodon loop of tRNA(Ala) (32-UUAGCAU-38) after positions 33 and 36. Cleaves a subset of tRNAs, including tRNA(Ala), tRNA(Glu), tRNA(Gly), tRNA(Lys), tRNA(Val), tRNA(His), tRNA(Asp) and tRNA(Sec). Under growth conditions and in differentiated cells, translocates to the nucleus and stimulates ribosomal RNA (rRNA) transcription, including that containing the initiation site sequences of 45S rRNA, thereby promoting cell growth and proliferation. Angiogenin induces vascularization of normal and malignant tissues via its ability to promote rRNA transcription. The polypeptide is Angiogenin (ANG) (Gallus gallus (Chicken)).